A 463-amino-acid polypeptide reads, in one-letter code: Alpha-L-arabinofuranosidase B (463 aa).

The first 26 residues, Met-1–Ala-26, serve as a signal peptide directing secretion. The tract at residues Gly-27–Lys-308 is catalytic. A disulfide bridge connects residues Cys-29 and Cys-39. Residue Asn-81 is glycosylated (N-linked (GlcNAc...) asparagine). 2 cysteine pairs are disulfide-bonded: Cys-89–Cys-94 and Cys-184–Cys-185. Residue Asp-227 participates in substrate binding. Glu-229 serves as the catalytic Nucleophile. Asn-230 is a substrate binding site. The N-linked (GlcNAc...) asparagine glycan is linked to Asn-280. Gly-304 provides a ligand contact to substrate. Residues Leu-309 to Ala-463 form an ABD region. Residue Asn-332 is glycosylated (N-linked (GlcNAc...) asparagine). A disulfide bridge connects residues Cys-366 and Cys-404. Residues His-381, Asn-383, Phe-384, His-428, Asp-430, Leu-433, and Asp-453 each contribute to the substrate site.

This sequence belongs to the glycosyl hydrolase 54 family. Residue Asn-280 is mannosylated with up to 7 mannose residues.

The protein localises to the secreted. The catalysed reaction is Hydrolysis of terminal non-reducing alpha-L-arabinofuranoside residues in alpha-L-arabinosides.. The protein operates within glycan metabolism; L-arabinan degradation. Secreted alpha-L-arabinofuranosidase that actively hydrolyzes p-NP-alpha-L-arabinofuranoside and is specific for furanose configuration of the carbohydrate ring. Also exhibits significant activity against polymeric arabinose-containing substrates such as arabinan and arabinoxylan, a major component of plant hemicellulose. This is Alpha-L-arabinofuranosidase B (abfB) from Penicillium canescens.